The sequence spans 680 residues: Chaperone protein dnaK3 (680 aa).

Position 205 is a phosphothreonine; by autocatalysis (Thr205). A disordered region spans residues 640–680 (GRERRRDDDEDEWAEPPRTRRSRSYSQRADSAPWDDWDDDW).

This sequence belongs to the heat shock protein 70 family.

Functionally, acts as a chaperone. This Thermosynechococcus vestitus (strain NIES-2133 / IAM M-273 / BP-1) protein is Chaperone protein dnaK3 (dnaK3).